Consider the following 311-residue polypeptide: Fucose-specific lectin (311 aa).

6 tandem repeats follow at residues 1–53, 54–103, 104–151, 152–209, 210–256, and 257–311. Residues 1-311 are 6 X approximate tandem repeats; the sequence is MSTPGAQEVL…LGRRALPPAE (311 aa). Positions 25, 37, 44, 73, 85, 94, 126, 138, 146, 177, 189, 198, 230, 242, 277, and 291 each coordinate beta-L-fucose.

Belongs to the fungal fucose-specific lectin family. Homodimer.

Its function is as follows. Lectin that specifically binds to L-fucose and weakly reacts with mannose and N-acetyl-neuraminic acid. Has strongest preference for the alpha-1,6-fucosylated chain (core fucose) on glycoproteins among alpha-1,2-, alpha-1,3-, alpha-1,4-, and alpha-1,6-fucosylated chains. Binds to fucose residues of IgE in mice and human, causing antigen-independent IgE-mediated mast cell activation and anaphylactoid reactions in mice and is possibly implicated in allergic response to Aspergillus oryzae in humans. Induces secretion of pro-inflammatory cytokines IL6 and IL8 implicated in ocular diseases such as mycotic keratitis, probably through its interaction with host toll-like receptors TLR2 and TLR4, followed by up-regulation of pro-inflammatory cytokines. This Aspergillus oryzae (strain ATCC 42149 / RIB 40) (Yellow koji mold) protein is Fucose-specific lectin.